The following is a 285-amino-acid chain: ATP synthase gamma chain (285 aa).

It belongs to the ATPase gamma chain family. In terms of assembly, F-type ATPases have 2 components, CF(1) - the catalytic core - and CF(0) - the membrane proton channel. CF(1) has five subunits: alpha(3), beta(3), gamma(1), delta(1), epsilon(1). CF(0) has three main subunits: a, b and c.

Its subcellular location is the cell inner membrane. Functionally, produces ATP from ADP in the presence of a proton gradient across the membrane. The gamma chain is believed to be important in regulating ATPase activity and the flow of protons through the CF(0) complex. The protein is ATP synthase gamma chain of Protochlamydia amoebophila (strain UWE25).